The chain runs to 358 residues: Ribosomal RNA-processing protein 8 (358 aa).

A disordered region spans residues 1-81; sequence MKPFEVPPWE…PQDSSDDDYE (81 aa). Over residues 30-44 the composition is skewed to basic residues; that stretch reads AKKKPKKKKPKKKKA. 2 positions are modified to phosphoserine: Ser-75 and Ser-76. S-adenosyl-L-methionine is bound by residues His-185, Gly-220, Asp-238, and Cys-267.

Belongs to the methyltransferase superfamily. RRP8 family.

It localises to the nucleus. The protein localises to the nucleolus. In terms of biological role, probable methyltransferase required to silence rDNA. The protein is Ribosomal RNA-processing protein 8 of Drosophila melanogaster (Fruit fly).